Reading from the N-terminus, the 292-residue chain is MQKYEKLEKIGEGTYGTVFKAKNRETHEIVALKRVRLDDDDEGVPSSALREICLLKELKHKNIVRLHDVLHSDKKLTLVFEFCDQDLKKYFDSCNGDLDPEIVKSLLFQLLKGLGFCHSRNVLHRDLKPQNLLINRNGELKLADFGLARAFGIPVRCYSAEVVTLWYRPPDVLFGAKLYSTSIDMWSAGCIFAELANAGRPLFPGNDVDDQLKRIFRLLGTPTEEQWPAMTKLPDYKPYPMYPATTSLVNVVPKLNATGRDLLQNLLKCNPVQRISAEEALQHPYFSDFCPP.

The region spanning 4 to 286 (YEKLEKIGEG…AEEALQHPYF (283 aa)) is the Protein kinase domain. ATP is bound by residues 10-18 (IGEGTYGTV) and lysine 33. The residue at position 15 (tyrosine 15) is a Phosphotyrosine; by ABL1, EPHA4 and FYN. Phosphothreonine is present on threonine 17. Residue lysine 56 is modified to N6-acetyllysine. Residue serine 72 is modified to Phosphoserine. Residue aspartate 126 is the Proton acceptor of the active site. Serine 159 is subject to Phosphoserine.

Belongs to the protein kinase superfamily. CMGC Ser/Thr protein kinase family. CDC2/CDKX subfamily. Heterodimer composed of a catalytic subunit CDK5 and a regulatory subunit CDK5R1 (p25) and macromolecular complex composed of at least CDK5, CDK5R1 (p35) and CDK5RAP1 or CDK5RAP2 or CDK5RAP3. Only the heterodimer shows kinase activity. Under neurotoxic stress and neuronal injury conditions, p35 is cleaved by calpain to generate p25 that hyperactivates CDK5, that becomes functionally disabled and often toxic. Found in a trimolecular complex with CABLES1 and ABL1. Interacts with CABLES1 and CABLES2. Interacts with AATK and GSTP1. Binds to HDAC1 when in complex with p25. Interaction with myristoylation p35 promotes CDK5 association with membranes. Both isoforms 1 and 2 interacts with beta-catenin/CTNNB1. Interacts with delta-catenin/CTNND2 and APEX1. Interacts with P53/TP53 in neurons. Interacts with PTK2/FAK1. Interacts with EPHA4; may mediate the activation of NGEF by EPHA4. The complex p35/CDK5 interacts with CLOCK. Interacts with HTR6. In terms of processing, phosphorylation on Tyr-15 by ABL1 and FYN, and on Ser-159 by casein kinase 1 promotes kinase activity. By contrast, phosphorylation at Thr-14 inhibits activity. Post-translationally, phosphorylation at Ser-159 is essential for maximal catalytic activity. In terms of tissue distribution, expressed in hippocampal neuronal synaptic termini (at protein level). Expressed predominantly in post-mitotic neurons of the central and peripheral nervous system.

It is found in the cytoplasm. The protein localises to the nucleus. It localises to the cell membrane. The protein resides in the perikaryon. Its subcellular location is the cell projection. It is found in the lamellipodium. The protein localises to the growth cone. It localises to the postsynaptic density. The protein resides in the synapse. It carries out the reaction L-seryl-[protein] + ATP = O-phospho-L-seryl-[protein] + ADP + H(+). It catalyses the reaction L-threonyl-[protein] + ATP = O-phospho-L-threonyl-[protein] + ADP + H(+). Its activity is regulated as follows. Inhibited by 2-(1-ethyl-2-hydroxyethylamino)-6-benzylamino-9-isopropylpurine (roscovitine), 1-isopropyl-4-aminobenzyl-6-ether-linked benzimidazoles, resveratrol, AT-7519 and olomoucine. Activated by CDK5R1 (p35) and CDK5R2 (p39) during the development of the nervous system; degradation of CDK5R1 (p35) and CDK5R2 (p39) by proteasome result in down regulation of kinase activity, during this process, CDK5 phosphorylates p35 and induces its ubiquitination and subsequent degradation. Kinase activity is mainly determined by the amount of p35 available and subcellular location; reversible association to plasma membrane inhibits activity. Long-term inactivation as well as CDK5R1 (p25)-mediated hyperactivation of CDK5 triggers cell death. The pro-death activity of hyperactivated CDK5 is suppressed by membrane association of CDK5, via myristoylation of p35. Brain-derived neurotrophic factor, glial-derived neurotrophic factor, nerve growth factor (NGF), retinoic acid, laminin and neuregulin promote activity. Neurotoxicity enhances nuclear activity, thus leading to MEF2 phosphorylation and inhibition prior to apoptosis of cortical neurons. Repression by GSTP1 via p25/p35 translocation prevents neurodegeneration. In terms of biological role, proline-directed serine/threonine-protein kinase essential for neuronal cell cycle arrest and differentiation and may be involved in apoptotic cell death in neuronal diseases by triggering abortive cell cycle re-entry. Interacts with D1 and D3-type G1 cyclins. Phosphorylates SRC, NOS3, VIM/vimentin, p35/CDK5R1, MEF2A, SIPA1L1, SH3GLB1, PXN, PAK1, MCAM/MUC18, SEPT5, SYN1, DNM1, AMPH, SYNJ1, CDK16, RAC1, RHOA, CDC42, TONEBP/NFAT5, MAPT/TAU, MAP1B, histone H1, p53/TP53, HDAC1, APEX1, PTK2/FAK1, huntingtin/HTT, ATM, MAP2, NEFH and NEFM. Regulates several neuronal development and physiological processes including neuronal survival, migration and differentiation, axonal and neurite growth, synaptogenesis, oligodendrocyte differentiation, synaptic plasticity and neurotransmission, by phosphorylating key proteins. Negatively regulates the CACNA1B/CAV2.2 -mediated Ca(2+) release probability at hippocampal neuronal soma and synaptic terminals. Activated by interaction with CDK5R1 (p35) and CDK5R2 (p39), especially in postmitotic neurons, and promotes CDK5R1 (p35) expression in an autostimulation loop. Phosphorylates many downstream substrates such as Rho and Ras family small GTPases (e.g. PAK1, RAC1, RHOA, CDC42) or microtubule-binding proteins (e.g. MAPT/TAU, MAP2, MAP1B), and modulates actin dynamics to regulate neurite growth and/or spine morphogenesis. Also phosphorylates exocytosis associated proteins such as MCAM/MUC18, SEPT5, SYN1, and CDK16/PCTAIRE1 as well as endocytosis associated proteins such as DNM1, AMPH and SYNJ1 at synaptic terminals. In the mature central nervous system (CNS), regulates neurotransmitter movements by phosphorylating substrates associated with neurotransmitter release and synapse plasticity; synaptic vesicle exocytosis, vesicles fusion with the presynaptic membrane, and endocytosis. Promotes cell survival by activating anti-apoptotic proteins BCL2 and STAT3, and negatively regulating of JNK3/MAPK10 activity. Phosphorylation of p53/TP53 in response to genotoxic and oxidative stresses enhances its stabilization by preventing ubiquitin ligase-mediated proteasomal degradation, and induces transactivation of p53/TP53 target genes, thus regulating apoptosis. Phosphorylation of p35/CDK5R1 enhances its stabilization by preventing calpain-mediated proteolysis producing p25/CDK5R1 and avoiding ubiquitin ligase-mediated proteasomal degradation. During aberrant cell-cycle activity and DNA damage, p25/CDK5 activity elicits cell-cycle activity and double-strand DNA breaks that precedes neuronal death by deregulating HDAC1. DNA damage triggered phosphorylation of huntingtin/HTT in nuclei of neurons protects neurons against polyglutamine expansion as well as DNA damage mediated toxicity. Phosphorylation of PXN reduces its interaction with PTK2/FAK1 in matrix-cell focal adhesions (MCFA) during oligodendrocytes (OLs) differentiation. Negative regulator of Wnt/beta-catenin signaling pathway. Activator of the GAIT (IFN-gamma-activated inhibitor of translation) pathway, which suppresses expression of a post-transcriptional regulon of proinflammatory genes in myeloid cells; phosphorylates the linker domain of glutamyl-prolyl tRNA synthetase (EPRS) in a IFN-gamma-dependent manner, the initial event in assembly of the GAIT complex. Phosphorylation of SH3GLB1 is required for autophagy induction in starved neurons. Phosphorylation of TONEBP/NFAT5 in response to osmotic stress mediates its rapid nuclear localization. MEF2 is inactivated by phosphorylation in nucleus in response to neurotoxin, thus leading to neuronal apoptosis. APEX1 AP-endodeoxyribonuclease is repressed by phosphorylation, resulting in accumulation of DNA damage and contributing to neuronal death. NOS3 phosphorylation down regulates NOS3-derived nitrite (NO) levels. SRC phosphorylation mediates its ubiquitin-dependent degradation and thus leads to cytoskeletal reorganization. May regulate endothelial cell migration and angiogenesis via the modulation of lamellipodia formation. Involved in dendritic spine morphogenesis by mediating the EFNA1-EPHA4 signaling. The complex p35/CDK5 participates in the regulation of the circadian clock by modulating the function of CLOCK protein: phosphorylates CLOCK at 'Thr-451' and 'Thr-461' and regulates the transcriptional activity of the CLOCK-BMAL1 heterodimer in association with altered stability and subcellular distribution. In Rattus norvegicus (Rat), this protein is Cyclin-dependent kinase 5.